A 434-amino-acid chain; its full sequence is Nicotinate phosphoribosyltransferase (434 aa).

At His-242 the chain carries Phosphohistidine; by autocatalysis.

It belongs to the NAPRTase family. In terms of processing, transiently phosphorylated on a His residue during the reaction cycle. Phosphorylation strongly increases the affinity for substrates and increases the rate of nicotinate D-ribonucleotide production. Dephosphorylation regenerates the low-affinity form of the enzyme, leading to product release.

The enzyme catalyses nicotinate + 5-phospho-alpha-D-ribose 1-diphosphate + ATP + H2O = nicotinate beta-D-ribonucleotide + ADP + phosphate + diphosphate. The protein operates within cofactor biosynthesis; NAD(+) biosynthesis; nicotinate D-ribonucleotide from nicotinate: step 1/1. Catalyzes the synthesis of beta-nicotinate D-ribonucleotide from nicotinate and 5-phospho-D-ribose 1-phosphate at the expense of ATP. This chain is Nicotinate phosphoribosyltransferase, found in Mesorhizobium japonicum (strain LMG 29417 / CECT 9101 / MAFF 303099) (Mesorhizobium loti (strain MAFF 303099)).